A 97-amino-acid chain; its full sequence is Sm-like protein LSM3A (97 aa).

Ser-2 carries the N-acetylserine modification. The region spanning 11 to 96 (EPLDLIRLSI…VILVSPPLRT (86 aa)) is the Sm domain.

Belongs to the snRNP Sm proteins family. Component of the heptameric LSM1-LSM7 complex that forms a seven-membered ring structure with a donut shape. The LSM subunits are arranged in the order LSM1, LSM2, LSM3, LSM6, LSM5, LSM7 and LSM4. Component of the heptameric LSM2-LSM8 complex that forms a seven-membered ring structure with a donut shape. The LSM subunits are arranged in the order LSM8, LSM2, LSM3, LSM6, LSM5, LSM7 and LSM4. LSM3A subunit interacts only with its two neighboring subunits, LSM2 and LSM6A or LSM6B. As to expression, expressed in roots, leaves, stems, flowers and siliques.

It localises to the cytoplasm. It is found in the nucleus. Its function is as follows. Component of LSM protein complexes, which are involved in RNA processing. Component of the cytoplasmic LSM1-LSM7 complex which is involved in mRNA degradation by promoting decapping and leading to accurate 5'-3' mRNA decay. The cytoplasmic LSM1-LSM7 complex regulates developmental gene expression by the decapping of specific development-related transcripts. Component of the nuclear LSM2-LSM8 complex which is involved splicing nuclear mRNAs. LSM2-LSM8 binds directly to the U6 small nuclear RNAs (snRNAs) and is essential for accurate splicing of selected development-related mRNAs through the stabilization of the spliceosomal U6 snRNA. Plays a critical role in the regulation of development-related gene expression. The polypeptide is Sm-like protein LSM3A (Arabidopsis thaliana (Mouse-ear cress)).